The primary structure comprises 300 residues: Ribosomal RNA small subunit methyltransferase H (300 aa).

S-adenosyl-L-methionine-binding positions include 46-48, D65, F92, D107, and Q114; that span reads GGH.

The protein belongs to the methyltransferase superfamily. RsmH family.

The protein resides in the cytoplasm. The enzyme catalyses cytidine(1402) in 16S rRNA + S-adenosyl-L-methionine = N(4)-methylcytidine(1402) in 16S rRNA + S-adenosyl-L-homocysteine + H(+). Specifically methylates the N4 position of cytidine in position 1402 (C1402) of 16S rRNA. The sequence is that of Ribosomal RNA small subunit methyltransferase H from Prochlorococcus marinus (strain MIT 9515).